A 231-amino-acid polypeptide reads, in one-letter code: Small ribosomal subunit protein bS18c (231 aa).

2 disordered regions span residues 1 to 31 (MEKS…PIES) and 95 to 231 (QKEE…TRKK). A compositionally biased stretch (basic residues) spans 9 to 26 (IKKKRPFRKKKRSFRKRR). 3 stretches are compositionally biased toward basic and acidic residues: residues 95–151 (QKEE…EFQR), 159–169 (TNEKQTNEKQT), and 212–231 (TNEK…TRKK).

It belongs to the bacterial ribosomal protein bS18 family. As to quaternary structure, part of the 30S ribosomal subunit.

Its subcellular location is the plastid. The protein resides in the chloroplast. The polypeptide is Small ribosomal subunit protein bS18c (Jasminum nudiflorum (Winter jasmine)).